Here is a 427-residue protein sequence, read N- to C-terminus: Histidine--tRNA ligase (427 aa).

Belongs to the class-II aminoacyl-tRNA synthetase family. As to quaternary structure, homodimer.

It localises to the cytoplasm. It carries out the reaction tRNA(His) + L-histidine + ATP = L-histidyl-tRNA(His) + AMP + diphosphate + H(+). This chain is Histidine--tRNA ligase, found in Proteus mirabilis (strain HI4320).